We begin with the raw amino-acid sequence, 164 residues long: DNA-directed RNA polymerase 19 kDa subunit (164 aa).

Residues 1-35 are compositionally biased toward acidic residues; the sequence is MADTDDIIDYESDDLTEYEDDEEEEEDGESLETSD. Residues 1 to 39 form a disordered region; sequence MADTDDIIDYESDDLTEYEDDEEEEEDGESLETSDIDPK.

This sequence belongs to the poxviridae DNA-directed RNA polymerase 19 kDa subunit family. The DNA-dependent RNA polymerase used for intermediate and late genes expression consists of eight subunits Rpo30/OPG66, Rpo7/OPG90, Rpo22/OPG103, Rpo147/OPG105, Rpo18/OPG119, Rpo19/OPG131, Rpo132/OPG151 and Rpo35/OPG156. The same holoenzyme, with the addition of the transcription-specificity factor OPG109, is used for early gene expression.

The protein localises to the virion. It catalyses the reaction RNA(n) + a ribonucleoside 5'-triphosphate = RNA(n+1) + diphosphate. Part of the DNA-dependent RNA polymerase which catalyzes the transcription of viral DNA into RNA using the four ribonucleoside triphosphates as substrates. Responsible for the transcription of early, intermediate and late genes. DNA-dependent RNA polymerase associates with the early transcription factor (ETF), itself composed of OPG118 and OPG133, thereby allowing the early genes transcription. Late transcription, and probably also intermediate transcription, require newly synthesized RNA polymerase. This is DNA-directed RNA polymerase 19 kDa subunit (OPG131) from Homo sapiens (Human).